The primary structure comprises 781 residues: Aconitate hydratase, mitochondrial (781 aa).

The N-terminal 27 residues, 1–27, are a transit peptide targeting the mitochondrion; it reads MAPYSLLVTRLQKALGVRQYHVASVLC. Q28 is subject to Pyrrolidone carboxylic acid. K31 carries the N6-succinyllysine modification. K50 bears the N6-acetyllysine; alternate mark. K50 bears the N6-succinyllysine; alternate mark. Q99 serves as a coordination point for substrate. N6-acetyllysine; alternate is present on residues K138 and K144. An N6-succinyllysine; alternate mark is found at K138 and K144. 192–194 provides a ligand contact to substrate; the sequence is DSH. K233 bears the N6-acetyllysine; alternate mark. K233 bears the N6-succinyllysine; alternate mark. A [4Fe-4S] cluster-binding site is contributed by C385. K411 bears the N6-succinyllysine mark. 2 residues coordinate [4Fe-4S] cluster: C448 and C451. Substrate contacts are provided by R474 and R479. Residues K517 and K523 each carry the N6-acetyllysine; alternate modification. Residues K517 and K523 each carry the N6-succinyllysine; alternate modification. Residues 524 to 537 are compositionally biased toward basic and acidic residues; sequence LEAPDADELPRAEF. Residues 524-561 form a disordered region; it reads LEAPDADELPRAEFDPGQDTYQHPPKDSSGQRVDVSPT. An N6-succinyllysine modification is found at K549. The segment covering 551 to 561 has biased composition (polar residues); it reads SSGQRVDVSPT. Position 559 is a phosphoserine (S559). Position 573 is an N6-acetyllysine; alternate (K573). Position 573 is an N6-succinyllysine; alternate (K573). Residues K577 and K591 each carry the N6-succinyllysine modification. An N6-acetyllysine; alternate modification is found at K605. Residue K605 is modified to N6-succinyllysine; alternate. Residue R607 participates in substrate binding. K628 is subject to N6-succinyllysine. S670 is subject to Phosphoserine. Substrate is bound at residue 670–671; the sequence is SR. At K689 the chain carries N6-succinyllysine. Residues K723 and K730 each carry the N6-acetyllysine; alternate modification. K723 and K730 each carry N6-succinyllysine; alternate. K736, K739, and K743 each carry N6-acetyllysine.

This sequence belongs to the aconitase/IPM isomerase family. As to quaternary structure, monomer. It depends on [4Fe-4S] cluster as a cofactor. In terms of processing, forms covalent cross-links mediated by transglutaminase TGM2, between a glutamine and the epsilon-amino group of a lysine residue, forming homopolymers and heteropolymers.

Its subcellular location is the mitochondrion. The enzyme catalyses citrate = D-threo-isocitrate. The protein operates within carbohydrate metabolism; tricarboxylic acid cycle; isocitrate from oxaloacetate: step 2/2. Functionally, catalyzes the isomerization of citrate to isocitrate via cis-aconitate. This is Aconitate hydratase, mitochondrial (ACO2) from Sus scrofa (Pig).